The sequence spans 1372 residues: Disease resistance protein RRS1B (1372 aa).

Positions 2–137 constitute a TIR domain; the sequence is TESEQIVYIS…ETVRDVYEKL (136 aa). Residues 166–417 form the NB-ARC domain; that stretch reads VGIWGMPGIG…GCGFFPHVGI (252 aa). 170–177 lines the ATP pocket; that stretch reads GMPGIGKT. An LRR 1 repeat occupies 491-515; it reads PEEIEGMFLDTSNLSFDIKHVAFDN. One copy of the LRR 2; degenerate repeat lies at 528 to 544; sequence NPEVHHVNNFLKGSLSS. LRR repeat units follow at residues 545-568, 570-591, 614-637, 638-658, 659-681, 693-718, 723-747, 749-767, 768-792, and 798-823; these read LPNV…NFDP, HLVE…TKDL, AQNL…TGQL, LHLR…PEIP, PNIE…IVKP, IPGL…KIST, PGKL…VNLE, LKAL…QGFP, RNLK…SLEF, and CVSL…CFDL. Positions 950–964 match the Nuclear localization signal motif; that stretch reads INLHCWALGKAVERD. Residues 1174–1240 constitute a DNA-binding region (WRKY); sequence DRGSRSSDLW…YISEHNHPFP (67 aa). Disordered regions lie at residues 1246-1288 and 1337-1372; these read LAGS…ASPP and QTMF…ILNR. Residues 1249-1269 are compositionally biased toward low complexity; the sequence is STRSSSSKCSDVTTSASSTVS. The segment covering 1270–1279 has biased composition (basic and acidic residues); the sequence is QDKEGPDKSH. A compositionally biased stretch (polar residues) spans 1337-1348; sequence QTMFLSRRSSGG.

Belongs to the disease resistance TIR-NB-LRR family. As to quaternary structure, interacts with RPS4B. RPS4B-RRS1B heterodimer interacts with the bacterial effectors AvrRps4 and PopP2.

It localises to the nucleus. Functionally, transcription factor. Interacts specifically with the W box (5'-(T)TGAC[CT]-3'), a frequently occurring elicitor-responsive cis-acting element. Also acts as a disease resistance protein that specifically recognizes the AvrRps4 type III effector avirulence protein from P.syringae. Heterodimerization with RPS4B is required to form a functional complex to recognize AvrRps4 and to mediate the hypersensitive response. The polypeptide is Disease resistance protein RRS1B (Arabidopsis thaliana (Mouse-ear cress)).